Reading from the N-terminus, the 436-residue chain is D-amino acid dehydrogenase (436 aa).

3–17 (IVVLGAGVVGVTSAY) is an FAD binding site.

This sequence belongs to the DadA oxidoreductase family. The cofactor is FAD.

The enzyme catalyses a D-alpha-amino acid + A + H2O = a 2-oxocarboxylate + AH2 + NH4(+). Its pathway is amino-acid degradation; D-alanine degradation; NH(3) and pyruvate from D-alanine: step 1/1. Functionally, oxidative deamination of D-amino acids. The polypeptide is D-amino acid dehydrogenase (Cereibacter sphaeroides (strain ATCC 17029 / ATH 2.4.9) (Rhodobacter sphaeroides)).